The primary structure comprises 55 residues: Large ribosomal subunit protein bL33B (55 aa).

Belongs to the bacterial ribosomal protein bL33 family.

The chain is Large ribosomal subunit protein bL33B from Mycolicibacterium paratuberculosis (strain ATCC BAA-968 / K-10) (Mycobacterium paratuberculosis).